A 310-amino-acid polypeptide reads, in one-letter code: tRNA-cytidine(32) 2-sulfurtransferase (310 aa).

The PP-loop motif motif lies at 45 to 50; that stretch reads SGGKDS. [4Fe-4S] cluster is bound by residues Cys120, Cys123, and Cys211.

Belongs to the TtcA family. In terms of assembly, homodimer. Requires Mg(2+) as cofactor. It depends on [4Fe-4S] cluster as a cofactor.

It localises to the cytoplasm. It catalyses the reaction cytidine(32) in tRNA + S-sulfanyl-L-cysteinyl-[cysteine desulfurase] + AH2 + ATP = 2-thiocytidine(32) in tRNA + L-cysteinyl-[cysteine desulfurase] + A + AMP + diphosphate + H(+). The protein operates within tRNA modification. In terms of biological role, catalyzes the ATP-dependent 2-thiolation of cytidine in position 32 of tRNA, to form 2-thiocytidine (s(2)C32). The sulfur atoms are provided by the cysteine/cysteine desulfurase (IscS) system. The chain is tRNA-cytidine(32) 2-sulfurtransferase from Shewanella sp. (strain ANA-3).